The following is a 318-amino-acid chain: NADH-ubiquinone oxidoreductase chain 1 (318 aa).

The next 8 membrane-spanning stretches (helical) occupy residues 2-22 (FFINILTLLVPILIAMAFLTL), 70-90 (LFIIAPTLSLTLALSLWVPLP), 100-120 (LGILFILATSSLSVYSILWSG), 136-156 (VAQTISYEVTMAIILLSVLLM), 171-191 (HMWLLLPAWPMAMMWFISTLA), 231-251 (IILMNALTTIIFLGPLYYINL), 253-273 (ELYSTNFMMEALLLSSTFLWI), and 293-313 (FLPLTLALCMWHISLPIFTAG).

This sequence belongs to the complex I subunit 1 family. In terms of assembly, core subunit of respiratory chain NADH dehydrogenase (Complex I) which is composed of 45 different subunits.

It is found in the mitochondrion inner membrane. The catalysed reaction is a ubiquinone + NADH + 5 H(+)(in) = a ubiquinol + NAD(+) + 4 H(+)(out). Its function is as follows. Core subunit of the mitochondrial membrane respiratory chain NADH dehydrogenase (Complex I) which catalyzes electron transfer from NADH through the respiratory chain, using ubiquinone as an electron acceptor. Essential for the catalytic activity and assembly of complex I. The polypeptide is NADH-ubiquinone oxidoreductase chain 1 (Mtnd1) (Mus musculus (Mouse)).